The sequence spans 132 residues: Agouti-signaling protein (132 aa).

The first 22 residues, 1 to 22 (MDVTRLLLATLLVFLCFFTAYS), serve as a signal peptide directing secretion. N-linked (GlcNAc...) asparagine glycosylation occurs at asparagine 39. The interval 62 to 88 (ISRKEAEKKRSSKKEASMKKVARPRTP) is disordered. Basic and acidic residues predominate over residues 63-79 (SRKEAEKKRSSKKEASM). 5 disulfide bridges follow: cysteine 93/cysteine 108, cysteine 100/cysteine 114, cysteine 107/cysteine 125, cysteine 111/cysteine 132, and cysteine 116/cysteine 123. Residues 93 to 132 (CVATRDSCKPPAPACCDPCASCQCRFFRSACSCRVLSLNC) form the Agouti domain.

The protein localises to the secreted. Involved in the regulation of melanogenesis. The binding of ASP to MC1R precludes alpha-MSH initiated signaling and thus blocks production of cAMP, leading to a down-regulation of eumelanogenesis (brown/black pigment) and thus increasing synthesis of pheomelanin (yellow/red pigment). In Macaca radiata (Bonnet macaque), this protein is Agouti-signaling protein (ASIP).